The sequence spans 283 residues: Undecaprenyl-diphosphatase (283 aa).

The next 7 helical transmembrane spans lie at 40–60 (GAAF…IYFF), 85–105 (AKMG…GLLF), 113–133 (LRSL…LTIA), 153–173 (IGWK…IPGS), 193–213 (AARF…VFQL), 227–247 (LIAI…SIAF), and 259–279 (VFII…ATGM).

This sequence belongs to the UppP family.

The protein localises to the cell inner membrane. It carries out the reaction di-trans,octa-cis-undecaprenyl diphosphate + H2O = di-trans,octa-cis-undecaprenyl phosphate + phosphate + H(+). In terms of biological role, catalyzes the dephosphorylation of undecaprenyl diphosphate (UPP). Confers resistance to bacitracin. The protein is Undecaprenyl-diphosphatase of Chlorobium limicola (strain DSM 245 / NBRC 103803 / 6330).